Consider the following 228-residue polypeptide: Protein LIAT1 (228 aa).

The interval 1–108 is disordered; the sequence is MAGRGGTGAA…RAEPRDKEEN (108 aa). The segment covering 12–24 has biased composition (acidic residues); that stretch reads YGEEGEEEEEEEA. The tract at residues 49-71 is lysine-rich domain; it reads KRKVKKKKKKKKTKGSGKGDADK. Basic residues predominate over residues 50–63; that stretch reads RKVKKKKKKKKTKG. Over residues 90–108 the composition is skewed to basic and acidic residues; it reads LNPHKDHGLRAEPRDKEEN. Residues 113–165 are interaction with ATE1; that stretch reads PYSYSINHPCFAEIEDTLSSQINESLRWDGILTDPEAEKERIRIYKLNRRKRY. Repeat unit 1 spans residues 169 to 178; it reads ALKCFHSDPC.

In terms of assembly, self-associates (via Lys-rich domain); targets LIAT1 to the nucleolus. Interacts with ATE1; it is not a substrate of ATE1, the interaction takes place in the cytoplasm and seems to increase ATE1 arginyltransferase activity. Interacts with JMJD6 and MRPS14. Post-translationally, post-translationally modified by JMJD6 lysyl-hydroxylase activity at its Lys-rich domain, which inhibits its self-association and nucleolar localization. As to expression, highly expressed in spleen, thymus, liver and brown adipose tissue. Moderately expressed in liver, testis and lung.

Its subcellular location is the nucleus. The protein resides in the nucleolus. It is found in the cytoplasm. In terms of biological role, participates in nucleolar liquid-liquid phase separation (LLPS) through its N-terminal intrinsically disordered region (IDR). May be involved in ATE1-mediated N-terminal arginylation. This Mus musculus (Mouse) protein is Protein LIAT1.